We begin with the raw amino-acid sequence, 340 residues long: MALIHEILGKLSLEGNQSSSRQSKLGSVKAATHFDAEKDAAAIETAIKTKGVDELTIINILTNRSNEQRQDIAFAFHRRTKKDLPSALKGALSGNLETVMLGLIKTRPQYDASELKASMKGLGTDEDTLIEIICSRTNKELLDIQNAYRELFKTELEKDIMSDTSGDFRKLMVALAKGRRQEDGNMVDYEKIDQDARELYEAGVKRKGTDVTKWITIMTERSHPHLQKVFERYKSYSPYDIEESIKKEVKGDLENAFLNLVQCIQNKPLYFADRLYESMKGKGTKDKILIRIMVSRRNLDMLKIRQEFKKKYGKSLHYFIGQDTKGDYQRALLNLCGGDD.

The segment at 2 to 25 (ALIHEILGKLSLEGNQSSSRQSKL) is P10 binding site. Serine 27 bears the Phosphoserine; by PKC mark. 4 Annexin repeats span residues 34–105 (FDAE…GLIK), 106–177 (TRPQ…ALAK), 190–262 (EKID…NLVQ), and 266–337 (NKPL…NLCG).

It belongs to the annexin family. Tetramer of 2 light chains (p10 proteins) and 2 heavy chains (p36 proteins). In terms of tissue distribution, adult brain, heart, striated muscle, liver, kidney, and very high levels in skin.

Its subcellular location is the secreted. It is found in the extracellular space. The protein localises to the extracellular matrix. The protein resides in the basement membrane. Calcium-regulated membrane-binding protein whose affinity for calcium is greatly enhanced by anionic phospholipids. It binds two calcium ions with high affinity. This chain is Annexin A2-B (anxa2-b), found in Xenopus laevis (African clawed frog).